The following is a 90-amino-acid chain: Small ribosomal subunit protein bS18 (90 aa).

The protein belongs to the bacterial ribosomal protein bS18 family. As to quaternary structure, part of the 30S ribosomal subunit. Forms a tight heterodimer with protein bS6.

Its function is as follows. Binds as a heterodimer with protein bS6 to the central domain of the 16S rRNA, where it helps stabilize the platform of the 30S subunit. This chain is Small ribosomal subunit protein bS18, found in Porphyromonas gingivalis (strain ATCC 33277 / DSM 20709 / CIP 103683 / JCM 12257 / NCTC 11834 / 2561).